A 489-amino-acid chain; its full sequence is NADH-ubiquinone oxidoreductase chain 2 (489 aa).

13 consecutive transmembrane segments (helical) span residues 9–29 (LFPEIFLINATIILLIYGVVF), 47–67 (LGLLSVLITILLVAVGSPLAV), 80–100 (FTYFCQIFLLLSTASTMVMCL), 114–134 (IVLILLSTCSMLFMISAYDLI), 168–188 (FILGAFSSGILLFGCSMIYGF), 216–236 (IFMGILFIAVGFLFKITAVPF), 248–268 (PTIVTAFFSIAPKISILANML), 280–300 (WQQLFFFCSIASMILGALAAM), 309–329 (LAYSSIGHVGYLLIGFSCGTI), 335–355 (LLIGIFIYVLMTVNVFAIVLA), 376–396 (ILAITLSITMFSYAGIPPLAG), 401–421 (FYLFFAALGCGAYLLALIGVV), and 459–479 (LAITVFFITFFFLYPSPLFLV).

The protein belongs to the complex I subunit 2 family.

The protein localises to the mitochondrion inner membrane. It catalyses the reaction a ubiquinone + NADH + 5 H(+)(in) = a ubiquinol + NAD(+) + 4 H(+)(out). Functionally, core subunit of the mitochondrial membrane respiratory chain NADH dehydrogenase (Complex I) that is believed to belong to the minimal assembly required for catalysis. Complex I functions in the transfer of electrons from NADH to the respiratory chain. The immediate electron acceptor for the enzyme is believed to be ubiquinone. This chain is NADH-ubiquinone oxidoreductase chain 2 (ND2), found in Marchantia polymorpha (Common liverwort).